The chain runs to 353 residues: Phosphate acyltransferase (353 aa).

It belongs to the PlsX family. Homodimer. Probably interacts with PlsY.

The protein localises to the cytoplasm. It catalyses the reaction a fatty acyl-[ACP] + phosphate = an acyl phosphate + holo-[ACP]. It functions in the pathway lipid metabolism; phospholipid metabolism. In terms of biological role, catalyzes the reversible formation of acyl-phosphate (acyl-PO(4)) from acyl-[acyl-carrier-protein] (acyl-ACP). This enzyme utilizes acyl-ACP as fatty acyl donor, but not acyl-CoA. This Ralstonia pickettii (strain 12J) protein is Phosphate acyltransferase.